Consider the following 471-residue polypeptide: Anthocyanidin 3-O-glucosyltransferase (471 aa).

Catalysis depends on H24, which acts as the Proton acceptor. H24 serves as a coordination point for an anthocyanidin. The active-site Charge relay is the D130. Residue T152 coordinates UDP-alpha-D-glucose. H161 lines the an anthocyanidin pocket. UDP-alpha-D-glucose contacts are provided by A352, Q354, H369, W372, S374, and E377. Residue G392 coordinates an anthocyanidin. D393 and Q394 together coordinate UDP-alpha-D-glucose.

This sequence belongs to the UDP-glycosyltransferase family.

It carries out the reaction an anthocyanidin + UDP-alpha-D-glucose + H(+) = an anthocyanidin 3-O-beta-D-glucoside + UDP. It functions in the pathway pigment biosynthesis; anthocyanin biosynthesis. In terms of biological role, in the presence of other necessary color factors, this glycosylation reaction allows the accumulation of anthocyanin pigments. The polypeptide is Anthocyanidin 3-O-glucosyltransferase (BZ1) (Zea mays (Maize)).